A 1211-amino-acid polypeptide reads, in one-letter code: MAGAGSQHHPQGVAGGAVAGASAVSPTAAGPGEDSSDSEAEQEGPQKLIRKVSTSGQMRTKTSIKEGQLLKQTSSFQRWKKRYFKLRGRTLYYAKDSKSLIFDEVDLSDASVAEASTKNANNSFTIITPFRRLMLCAENRKEMEVWISSLKSVQSREPYEVAQFNVEHFSGMHNWYACSHARPTFCNVCRESLSGVTSHGLSCEVCKFKAHKRCAVRATNNCKWTTLASIGKDIIEDEDGVAMPHQWLEGNLPVSAKCAVCDKTCGSVLRLQDWKCLWCKTMVHTACKDVYHPVCPLGQCKVSIIPPIALNSTDSDGFCRATFSFCVSPLLVFVNSKSGDNQGVKFLRRFKQLLNPAQVFDLMNGGPYLGLRLFQKFDNFRILVCGGDGSVGWVLSEIDKLNLHKQCQLGVLPLGTGNDLARVLGWGGSYDDDTQLPQILEKLERASTKMLDRWSIMTYELKLPAKSSLLPEPVAATEEFYMTIYEDSVANHLTKIVNSDEHAVVISSAKILCETVKDFVAKVEKAQDRTLENTVVAEAVASKCSVLNEKLEQLLQALHADSQASRVPPGIGPAIPEEDTVESASDESLGESKDQLVNDIGKPSSQKAVKPREIMLRANSLKKAVRQVIEEAEKVMDEPAVQPSEPVSPSCDYDTETDEAKEDDAKESLSAKTTSQSPDAQASCGHPQTDSVAGPAMATTKENLPVLNTRIICPGLRAGLAASIAGSSIINKMLLANIDPFGATPFIDPDLDSLDGYSEKCVMNNYFGIGLDAKISLEFNNKREEHPEKCRSRTKNLMWYGVLGTRELLQRSYKNLEQRVQLECDGQYIPLPSLQGIAVLNIPSYAGGTNFWGGTKEDDIFAAPSFDDKILEVVAVFDSVQMAVSRVIKLQHHRIAQCRTVKITIFGDEGVPVQVDGEAWVQPPGIIKIVHKNRAQMLTRDRAFESTLKSWEDKQKCDSGKPVLRTNLYIHPAPDLATEEVSQMRLCSQAAEELITRICDAATIHCLLEQELAHAVNACSHALNKANPRFPESLTRDTATEIAINVKALYNETEALLVGRVPLHLESPHEERVSSALHSVEMELQKLTEIPWLYYILRPSEDEEPPLDCTKRNNKSTVFRIVPKFKKEKAQKQKTSSQPVQNWGTEEVAAWLDLLNLGEYKEIFIRHDVRGAELLHLERRDLKDLGIPKVGHMKRILQGIKELERNPPNLV.

The segment at 1 to 66 is disordered; it reads MAGAGSQHHP…QMRTKTSIKE (66 aa). Low complexity predominate over residues 19–32; sequence AGASAVSPTAAGPG. Positions 52–61 are enriched in polar residues; it reads VSTSGQMRTK. A PH domain is found at 62-155; sequence TSIKEGQLLK…WISSLKSVQS (94 aa). 2 Phorbol-ester/DAG-type zinc fingers span residues 172 to 222 and 244 to 295; these read MHNW…TNNC and PHQW…HPVC. A DAGKc domain is found at 325-460; the sequence is FCVSPLLVFV…LDRWSIMTYE (136 aa). 2 disordered regions span residues 562–613 and 634–694; these read SQAS…KPRE and KVMD…SVAG. Acidic residues-rich tracts occupy residues 576–589 and 653–662; these read PEED…DESL and YDTETDEAKE. Residues 670–691 are compositionally biased toward polar residues; it reads SAKTTSQSPDAQASCGHPQTDS. One can recognise an SAM domain in the interval 1143–1206; the sequence is WGTEEVAAWL…LQGIKELERN (64 aa).

This sequence belongs to the eukaryotic diacylglycerol kinase family. Interacts with RAF1 and BRAF. In terms of assembly, homooligomers. Heterooligomers. Oligomerization through the SAM domain inhibits the diacylglycerol kinase activity. Heterooligomerizes with SAM domain-containing isoforms of DGKD. As to quaternary structure, does not form homooligomers. In terms of processing, phosphorylated. Phosphorylation does not inhibit catalytic activity. Widely expressed. Detected in the granulosa cells of the primary and secondary follicles. Expressed in mature follicles and corpus lutea. Expressed in the oviductal epithelium. In the uterus, strongly expressed in the luminal epithelium. Detected in the uterine glands. As to expression, detected in ovary and uterus (at protein level). In terms of tissue distribution, specifically expressed in testis. Detected in the inner area of the testis. Strongly expressed in the secondary spermatocytes and the round spermatids and weakly detected in the primary spermatocytes.

Its subcellular location is the cytoplasm. The protein localises to the cell membrane. The protein resides in the cytoskeleton. It carries out the reaction a 1,2-diacyl-sn-glycerol + ATP = a 1,2-diacyl-sn-glycero-3-phosphate + ADP + H(+). The enzyme catalyses 1,2-di-(9Z-octadecenoyl)-sn-glycerol + ATP = 1,2-di-(9Z-octadecenoyl)-sn-glycero-3-phosphate + ADP + H(+). Its pathway is lipid metabolism; glycerolipid metabolism. In terms of biological role, diacylglycerol kinase that converts diacylglycerol/DAG into phosphatidic acid/phosphatidate/PA and regulates the respective levels of these two bioactive lipids. Thereby, acts as a central switch between the signaling pathways activated by these second messengers with different cellular targets and opposite effects in numerous biological processes. Plays a key role in promoting cell growth. Activates the Ras/B-Raf/C-Raf/MEK/ERK signaling pathway induced by EGF. Regulates the recruitment of RAF1 and BRAF from cytoplasm to membranes and their heterodimerization. The sequence is that of Diacylglycerol kinase eta from Mus musculus (Mouse).